Here is a 209-residue protein sequence, read N- to C-terminus: Small ribosomal subunit protein uS4 (209 aa).

The 61-residue stretch at Ser-98–Lys-158 folds into the S4 RNA-binding domain.

The protein belongs to the universal ribosomal protein uS4 family. Part of the 30S ribosomal subunit. Contacts protein S5. The interaction surface between S4 and S5 is involved in control of translational fidelity.

Functionally, one of the primary rRNA binding proteins, it binds directly to 16S rRNA where it nucleates assembly of the body of the 30S subunit. With S5 and S12 plays an important role in translational accuracy. The polypeptide is Small ribosomal subunit protein uS4 (Pseudothermotoga lettingae (strain ATCC BAA-301 / DSM 14385 / NBRC 107922 / TMO) (Thermotoga lettingae)).